An 81-amino-acid chain; its full sequence is RNA-binding protein Hfq (81 aa).

Residues 10 to 69 (DPFLNTLRKEHIPVSIYLVNGIKLQGHIDSFDQYVVLLKNTVTQMVYKHAISTVVPARAV) enclose the Sm domain.

It belongs to the Hfq family. In terms of assembly, homohexamer.

In terms of biological role, RNA chaperone that binds small regulatory RNA (sRNAs) and mRNAs to facilitate mRNA translational regulation in response to envelope stress, environmental stress and changes in metabolite concentrations. Also binds with high specificity to tRNAs. The chain is RNA-binding protein Hfq from Nitrosospira multiformis (strain ATCC 25196 / NCIMB 11849 / C 71).